The primary structure comprises 422 residues: Glycine amidinotransferase, mitochondrial (422 aa).

The transit peptide at 1–37 (MLRVRCVRGGSRGAEAVHYIGSMLRKGFVGWVQRSFQ) directs the protein to the mitochondrion. Active-site residues include Asp253 and His302. The Amidino-cysteine intermediate role is filled by Cys406.

Belongs to the amidinotransferase family. In terms of assembly, homodimer.

It localises to the mitochondrion inner membrane. It carries out the reaction L-arginine + glycine = guanidinoacetate + L-ornithine. The protein operates within amine and polyamine biosynthesis; creatine biosynthesis; creatine from L-arginine and glycine: step 1/2. Its function is as follows. Catalyzes the biosynthesis of guanidinoacetate, the immediate precursor of creatine. Creatine plays a vital role in energy metabolism in muscle tissues. May play a role in embryonic and central nervous system development. The sequence is that of Glycine amidinotransferase, mitochondrial from Xenopus tropicalis (Western clawed frog).